Reading from the N-terminus, the 193-residue chain is Ion-translocating oxidoreductase complex subunit A (193 aa).

Transmembrane regions (helical) follow at residues Phe-4–Gly-24, Ile-39–Val-59, Phe-71–Val-91, Ala-102–Met-122, Thr-134–Met-154, and Pro-171–Val-191.

Belongs to the NqrDE/RnfAE family. The complex is composed of six subunits: RnfA, RnfB, RnfC, RnfD, RnfE and RnfG.

The protein resides in the cellular chromatophore membrane. Functionally, part of a membrane-bound complex that couples electron transfer with translocation of ions across the membrane. Required for nitrogen fixation. Involved in electron transfer to nitrogenase. The polypeptide is Ion-translocating oxidoreductase complex subunit A (Rhodobacter capsulatus (Rhodopseudomonas capsulata)).